A 432-amino-acid chain; its full sequence is Small ribosomal subunit protein uS5m (432 aa).

A disordered region spans residues 110–130 (AGARKGRGKRTKKKKRKDLNR). The segment covering 113–127 (RKGRGKRTKKKKRKD) has biased composition (basic residues). Positions 220–284 (FDTRILEVRN…NRAIHYLHYI (65 aa)) constitute an S5 DRBM domain.

This sequence belongs to the universal ribosomal protein uS5 family. In terms of assembly, component of the mitochondrial ribosome small subunit (28S) which comprises a 12S rRNA and about 30 distinct proteins.

The protein localises to the mitochondrion. The chain is Small ribosomal subunit protein uS5m (Mrps5) from Mus musculus (Mouse).